The sequence spans 293 residues: ATP synthase gamma chain (293 aa).

The protein belongs to the ATPase gamma chain family. In terms of assembly, F-type ATPases have 2 components, CF(1) - the catalytic core - and CF(0) - the membrane proton channel. CF(1) has five subunits: alpha(3), beta(3), gamma(1), delta(1), epsilon(1). CF(0) has three main subunits: a, b and c.

The protein localises to the cell membrane. In terms of biological role, produces ATP from ADP in the presence of a proton gradient across the membrane. The gamma chain is believed to be important in regulating ATPase activity and the flow of protons through the CF(0) complex. This chain is ATP synthase gamma chain, found in Streptococcus gordonii (strain Challis / ATCC 35105 / BCRC 15272 / CH1 / DL1 / V288).